We begin with the raw amino-acid sequence, 301 residues long: GTPase Era (301 aa).

One can recognise an Era-type G domain in the interval K6 to I173. Positions G14–S21 are G1. G14–S21 contributes to the GTP binding site. The G2 stretch occupies residues Q40 to N44. The G3 stretch occupies residues D61–G64. GTP contacts are provided by residues D61 to I65 and N123 to D126. Positions N123–D126 are G4. Residues I152–A154 form a G5 region. A KH type-2 domain is found at T204 to K282.

This sequence belongs to the TRAFAC class TrmE-Era-EngA-EngB-Septin-like GTPase superfamily. Era GTPase family. As to quaternary structure, monomer.

It localises to the cytoplasm. The protein localises to the cell membrane. Functionally, an essential GTPase that binds both GDP and GTP, with rapid nucleotide exchange. Plays a role in 16S rRNA processing and 30S ribosomal subunit biogenesis and possibly also in cell cycle regulation and energy metabolism. The sequence is that of GTPase Era from Listeria welshimeri serovar 6b (strain ATCC 35897 / DSM 20650 / CCUG 15529 / CIP 8149 / NCTC 11857 / SLCC 5334 / V8).